Reading from the N-terminus, the 165-residue chain is Large ribosomal subunit protein uL10 (165 aa).

It belongs to the universal ribosomal protein uL10 family. As to quaternary structure, part of the ribosomal stalk of the 50S ribosomal subunit. The N-terminus interacts with L11 and the large rRNA to form the base of the stalk. The C-terminus forms an elongated spine to which L12 dimers bind in a sequential fashion forming a multimeric L10(L12)X complex.

Forms part of the ribosomal stalk, playing a central role in the interaction of the ribosome with GTP-bound translation factors. The polypeptide is Large ribosomal subunit protein uL10 (Mycoplasma capricolum subsp. capricolum (strain California kid / ATCC 27343 / NCTC 10154)).